We begin with the raw amino-acid sequence, 275 residues long: D-apionate oxidoisomerase (275 aa).

NAD(+)-binding positions include 11–13, E32, and D68; that span reads GKM. The Zn(2+) site is built by H113 and E183.

It belongs to the ApnO family. Zn(2+) is required as a cofactor.

It catalyses the reaction D-apionate + NAD(+) = 3-oxoisoapionate + NADH + H(+). Its pathway is carbohydrate metabolism. Involved in catabolism of D-apiose. Catalyzes the conversion of D-apionate to 3-oxo-isoapionate. This is D-apionate oxidoisomerase from Rhizobium rhizogenes (strain K84 / ATCC BAA-868) (Agrobacterium radiobacter).